The following is a 413-amino-acid chain: Tyrosine--tRNA ligase (413 aa).

Residues 57–66 (PTAPDIHLGH) carry the 'HIGH' region motif. The short motif at 241–245 (KMSKS) is the 'KMSKS' region element. Lys-244 serves as a coordination point for ATP. One can recognise an S4 RNA-binding domain in the interval 351-412 (VWLPRLMVQA…GKRKFARLHT (62 aa)).

The protein belongs to the class-I aminoacyl-tRNA synthetase family. TyrS type 2 subfamily. Homodimer.

The protein resides in the cytoplasm. It catalyses the reaction tRNA(Tyr) + L-tyrosine + ATP = L-tyrosyl-tRNA(Tyr) + AMP + diphosphate + H(+). Functionally, catalyzes the attachment of tyrosine to tRNA(Tyr) in a two-step reaction: tyrosine is first activated by ATP to form Tyr-AMP and then transferred to the acceptor end of tRNA(Tyr). The polypeptide is Tyrosine--tRNA ligase (Moorella thermoacetica (strain ATCC 39073 / JCM 9320)).